A 251-amino-acid polypeptide reads, in one-letter code: Xylose/arabinose import ATP-binding protein XylG (251 aa).

The ABC transporter domain occupies 5–241 (LEIRDVHKSF…EITEVMTSFA (237 aa)). 37 to 44 (GDNGAGKS) serves as a coordination point for ATP.

Belongs to the ABC transporter superfamily. The complex is composed of two ATP-binding proteins (XylG), two transmembrane proteins (XylH) and a solute-binding protein (XylF).

The protein localises to the cell membrane. It catalyses the reaction D-xylose(out) + ATP + H2O = D-xylose(in) + ADP + phosphate + H(+). The catalysed reaction is L-arabinose(out) + ATP + H2O = L-arabinose(in) + ADP + phosphate + H(+). Functionally, part of the ABC transporter complex XylFGH involved in the uptake of xylose and arabinose. Responsible for energy coupling to the transport system. The polypeptide is Xylose/arabinose import ATP-binding protein XylG (Sulfolobus acidocaldarius (strain ATCC 33909 / DSM 639 / JCM 8929 / NBRC 15157 / NCIMB 11770)).